Consider the following 206-residue polypeptide: MIKEKGILFILSGPSGVGKGTVRKKLFEEETDLQYSISMTTRDRRPGEVDGVDYFYKTKEEFEQLIKDGQLLEYAQYVNNYYGTPRNYVEETLENGQDVFLEIEVQGALQVKENFPEGVFIFLFPPSLDELKNRIVSRGTESQELVLNRLKEARNEIEMMDAYDYVVVNDKVQHAVDKVKTIIKSEHLKRERIAKQYKKILEDGLS.

A Guanylate kinase-like domain is found at 6-184; the sequence is GILFILSGPS…AVDKVKTIIK (179 aa). 13–20 contacts ATP; the sequence is GPSGVGKG.

This sequence belongs to the guanylate kinase family.

The protein localises to the cytoplasm. It carries out the reaction GMP + ATP = GDP + ADP. In terms of biological role, essential for recycling GMP and indirectly, cGMP. In Oceanobacillus iheyensis (strain DSM 14371 / CIP 107618 / JCM 11309 / KCTC 3954 / HTE831), this protein is Guanylate kinase.